Consider the following 96-residue polypeptide: Large ribosomal subunit protein eL43 (96 aa).

A C4-type zinc finger spans residues 39–60; it reads CTFCGKTATKRTCVGIWKCKKC.

This sequence belongs to the eukaryotic ribosomal protein eL43 family. In terms of assembly, component of the large ribosomal subunit. Mature ribosomes consist of a small (40S) and a large (60S) subunit. The 40S subunit contains about 32 different proteins and 1 molecule of RNA (18S). The 60S subunit contains about 42 different proteins and 3 molecules of RNA (28S, 5.8S and 5S).

Its subcellular location is the cytoplasm. In terms of biological role, component of the ribosome, a large ribonucleoprotein complex responsible for the synthesis of proteins in the cell. The small ribosomal subunit (SSU) binds messenger RNAs (mRNAs) and translates the encoded message by selecting cognate aminoacyl-transfer RNA (tRNA) molecules. The large subunit (LSU) contains the ribosomal catalytic site termed the peptidyl transferase center (PTC), which catalyzes the formation of peptide bonds, thereby polymerizing the amino acids delivered by tRNAs into a polypeptide chain. The nascent polypeptides leave the ribosome through a tunnel in the LSU and interact with protein factors that function in enzymatic processing, targeting, and the membrane insertion of nascent chains at the exit of the ribosomal tunnel. This Plasmodium falciparum (isolate 3D7) protein is Large ribosomal subunit protein eL43.